The primary structure comprises 528 residues: Calcium-dependent protein kinase 4 (528 aa).

The segment covering 1 to 16 (MGQEMSTQSDMQNENQ) has biased composition (polar residues). The disordered stretch occupies residues 1-36 (MGQEMSTQSDMQNENQKGNKRNLKGSQGKNGLKERS). Residue Gly-2 is the site of N-myristoyl glycine attachment. One can recognise a Protein kinase domain in the interval 70 to 328 (YKGIKILGKG…ARDALEHEWI (259 aa)). Residues 76-84 (LGKGSFGEV) and Lys-99 contribute to the ATP site. The active-site Proton acceptor is the Asp-193. A J domain autoinhibitory motif motif is present at residues 350 to 358 (NIKQFQSTQ). The interval 350–386 (NIKQFQSTQKLAQAALLYMGSKLTTIDETKELTKIFK) is j domain. Positions 359-368 (KLAQAALLYM) match the J domain EF-hand interaction motif motif. EF-hand domains follow at residues 376–411 (DETK…LLKL), 423–458 (AIEV…RKLL), 459–494 (LSTE…GDVS), and 498–528 (WKTV…LCNY). The Ca(2+) site is built by Asp-389, Asn-391, Asp-393, Gln-395, Glu-400, Asp-436, Asp-438, Asn-440, Tyr-442, Glu-447, Asp-472, Asp-474, Ser-476, Lys-478, Glu-483, Asp-506, Asn-508, Asp-510, Glu-512, and Glu-517.

Belongs to the protein kinase superfamily. Ser/Thr protein kinase family. CDPK subfamily. May interact with the pre-replication MCM complex prior male gametogenesis activation. It depends on Mg(2+) as a cofactor. Myristoylated; myristoylation may target it to different subcellular compartments. During male gametogenesis, myristoylation is required to initiate DNA replication but not for mitotic spindle assembly or axoneme activation. In terms of processing, not palmitoylated. Post-translationally, may be autophosphorylated on Thr-234 in vitro.

The protein resides in the cytoplasm. It is found in the membrane. The protein localises to the chromosome. The enzyme catalyses L-seryl-[protein] + ATP = O-phospho-L-seryl-[protein] + ADP + H(+). It carries out the reaction L-threonyl-[protein] + ATP = O-phospho-L-threonyl-[protein] + ADP + H(+). Activated by calcium. Upon calcium binding to the EF-hand domains, the C-terminus of the junction domain (J domain) undergoes a conformational change which results in the dissociation of the pseudo-substrate inhibitory motif from the catalytic domain. This, in turn, may facilitate the autophosphorylation of the activation loop at Thr-234, which leads to the kinase activation. Intracellular calcium increase is triggered by xanthurenic acid (XA), a small mosquito molecule that induces the differentiation of specialized transmission stages, the gametocytes, into male and female gametes. Activated by a decrease in temperature (20 degrees Celsius) and an increase in pH (7.6) occurring when the parasite is ingested by in the mosquito. Its function is as follows. Calcium-dependent protein kinase which acts as a sensor and effector of intracellular Ca(2+) levels probably in part downstream of cGMP-activated PKG kinase. Plays a central role in the host erythrocytes and hepatocytes infection cycles, sexual reproduction and mosquito transmission of the parasite. During the liver stage, involved in sporozoite motility and thus in sporozoite invasion of host hepatocytes, probably together with CDPK1 and CDPK5. Involved in merosome egress from host hepatocytes, probably together with CDPK5. During the asexual blood stage, involved in merozoite invasion of host erythrocytes and motility by stabilizing the inner membrane complex, a structure below the plasma membrane which acts as an anchor for the glidosome, an acto-myosin motor. Required for cell cycle progression in the male gametocyte. During male gametogenesis in the mosquito gut, required to initiate the first round of DNA replication, probably by facilitating the assembly of the pre-replicative MCM complex, to assemble the first mitotic spindle and, at the end of gametogenesis, to initiate axoneme motility, cytokinesis and subsequent exflagellation. For each of these steps, may phosphorylate SOC1, SOC2 and SOC3, respectively. Together with CDPK1, regulates ookinete gliding in the mosquito host midgut. In terms of biological role, during male gametogenesis in the mosquito gut, required to initiate the first round of DNA replication, probably by facilitating the assembly of the pre-replicative MCM complex, and to assemble the first mitotic spindle. At the end of male gametogenesis in the mosquito gut, required to initiate axoneme motility, cytokinesis and subsequent exflagellation. In Plasmodium berghei (strain Anka), this protein is Calcium-dependent protein kinase 4.